A 176-amino-acid chain; its full sequence is Disulfide bond formation protein B (176 aa).

Over 1–14 the chain is Cytoplasmic; it reads MLRFLNQCSRGRGA. A helical membrane pass occupies residues 15–31; the sequence is WLLMAFTALALEMVALW. Topologically, residues 32 to 49 are periplasmic; it reads FQHVMLLKPCVLCIYERC. Cysteines 41 and 44 form a disulfide. The helical transmembrane segment at 50–65 threads the bilayer; that stretch reads ALFGVMGAGLVGAIAP. Residues 66 to 71 lie on the Cytoplasmic side of the membrane; that stretch reads KTPLRY. A helical membrane pass occupies residues 72–89; sequence VAMVIWIYSAWRGLQLAY. Residues 90–144 lie on the Periplasmic side of the membrane; that stretch reads EHTMIQLHPSPFMTCDFMARFPDWLPLGKWLPQVFVASGDCAERQWSFLTLEMPQ. The cysteines at positions 104 and 130 are disulfide-linked. A helical transmembrane segment spans residues 145–163; the sequence is WLLGIFAAYLVVAIAVVIA. The Cytoplasmic portion of the chain corresponds to 164 to 176; that stretch reads QAFKPKKRDLFGR.

It belongs to the DsbB family.

The protein localises to the cell inner membrane. Required for disulfide bond formation in some periplasmic proteins. Acts by oxidizing the DsbA protein. The polypeptide is Disulfide bond formation protein B (Salmonella paratyphi A (strain ATCC 9150 / SARB42)).